The following is a 485-amino-acid chain: Protein disulfide-isomerase 1 (485 aa).

A signal peptide spans 1–20; the sequence is MSLSVSFIFLLVASIGAVVA. 2 consecutive Thioredoxin domains span residues 21–130 and 342–470; these read DSEN…KKSG and YLEG…KYAG. 2 disulfide bridges follow: cysteine 52–cysteine 55 and cysteine 393–cysteine 396. Active-site nucleophile residues include cysteine 393 and cysteine 396. The Prevents secretion from ER signature appears at 482-485; that stretch reads HEEL.

This sequence belongs to the protein disulfide isomerase family.

It localises to the endoplasmic reticulum lumen. The catalysed reaction is Catalyzes the rearrangement of -S-S- bonds in proteins.. The chain is Protein disulfide-isomerase 1 (pdi-1) from Caenorhabditis elegans.